A 53-amino-acid polypeptide reads, in one-letter code: uncharacterized protein (53 aa).

The helical transmembrane segment at Phe4–Tyr24 threads the bilayer.

The protein resides in the host membrane. This is an uncharacterized protein from Acidianus bottle-shaped virus (isolate Italy/Pozzuoli) (ABV).